The following is a 448-amino-acid chain: Multiple inositol polyphosphate phosphatase 1 (448 aa).

Residues 1–19 form the signal peptide; sequence MAPRRAACLLPLLVAVASA. His-69 is an active-site residue. N-linked (GlcNAc...) asparagine glycans are attached at residues Asn-203, Asn-257, Asn-409, and Asn-441. A Prevents secretion from ER motif is present at residues 445-448; it reads ADEL.

The protein belongs to the histidine acid phosphatase family. MINPP1 subfamily. N-glycosylated. In terms of tissue distribution, present in growth plate chondrocytes but not detectable in articular chondrocytes (at protein level). Spatially restricted to chondrocytes in the lower portion of the proliferative zone and the upper portion of the hypertrophic zone in the growth plate of long bones (at protein level). Weakly expressed in kidney, liver, lung, skin and spleen, and not detected in brain, heart and muscle.

It is found in the endoplasmic reticulum lumen. Its subcellular location is the secreted. The protein localises to the cell membrane. The catalysed reaction is 1D-myo-inositol hexakisphosphate + H2O = 1D-myo-inositol 1,2,4,5,6-pentakisphosphate + phosphate. It carries out the reaction 1D-myo-inositol 1,2,4,5,6-pentakisphosphate + H2O = 1D-myo-inositol 1,2,5,6-tetrakisphosphate + phosphate. It catalyses the reaction 1D-myo-inositol 1,2,5,6-tetrakisphosphate + H2O = 1D-myo-inositol 1,2,6-trisphosphate + phosphate. The enzyme catalyses 1D-myo-inositol 1,2,6-trisphosphate + H2O = 1D-myo-inositol 1,2-bisphosphate + phosphate. The catalysed reaction is 1D-myo-inositol 1,2-bisphosphate + H2O = 1D-myo-inositol 2-phosphate + phosphate. It carries out the reaction 1D-myo-inositol hexakisphosphate + H2O = 1D-myo-inositol 1,2,3,5,6-pentakisphosphate + phosphate. It catalyses the reaction 1D-myo-inositol 1,2,3,5,6-pentakisphosphate + H2O = 1D-myo-inositol 1,2,3,6-tetrakisphosphate + phosphate. The enzyme catalyses 1D-myo-inositol 1,2,3,6-tetrakisphosphate + H2O = 1D-myo-inositol 1,2,3-trisphosphate + phosphate. The catalysed reaction is 1D-myo-inositol 1,2,3-trisphosphate + H2O = 1D-myo-inositol 2,3-bisphosphate + phosphate. It carries out the reaction 1D-myo-inositol 2,3-bisphosphate + H2O = 1D-myo-inositol 2-phosphate + phosphate. It catalyses the reaction 1D-myo-inositol 1,3,4,5,6-pentakisphosphate + H2O = 1D-myo-inositol 1,4,5,6-tetrakisphosphate + phosphate. The enzyme catalyses 1D-myo-inositol 1,4,5,6-tetrakisphosphate + H2O = 1D-myo-inositol 1,4,5-trisphosphate + phosphate. The catalysed reaction is (2R)-2,3-bisphosphoglycerate + H2O = (2R)-2-phosphoglycerate + phosphate. Functionally, multiple inositol polyphosphate phosphatase that hydrolyzes 1D-myo-inositol 1,3,4,5,6-pentakisphosphate (InsP5[2OH]) and 1D-myo-inositol hexakisphosphate (InsP6) to a range of less phosphorylated inositol phosphates. This regulates the availability of these various small molecule second messengers and metal chelators which control many aspects of cell physiology. Has a weak in vitro activity towards 1D-myo-inositol 1,4,5-trisphosphate which is unlikely to be physiologically relevant. By regulating intracellular inositol polyphosphates pools, which act as metal chelators, it may control the availability of intracellular calcium and iron, which are important for proper neuronal development and homeostasis. May have a dual substrate specificity, and function as a 2,3-bisphosphoglycerate 3-phosphatase hydrolyzing 2,3-bisphosphoglycerate to 2-phosphoglycerate. 2,3-bisphosphoglycerate (BPG) is formed as part of the Rapoport-Luebering glycolytic bypass and is a regulator of systemic oxygen homeostasis as the major allosteric effector of hemoglobin. The chain is Multiple inositol polyphosphate phosphatase 1 (MINPP1) from Gallus gallus (Chicken).